Reading from the N-terminus, the 445-residue chain is Tubulin beta-1 chain (445 aa).

Residues Q11, E69, S138, G142, T143, G144, N204, and N226 each coordinate GTP. Residue E69 participates in Mg(2+) binding. Positions 422–445 (QYQDAGMDDEYGEEYEDEAPAEEE) are disordered. The segment covering 427 to 445 (GMDDEYGEEYEDEAPAEEE) has biased composition (acidic residues).

Belongs to the tubulin family. Dimer of alpha and beta chains. A typical microtubule is a hollow water-filled tube with an outer diameter of 25 nm and an inner diameter of 15 nM. Alpha-beta heterodimers associate head-to-tail to form protofilaments running lengthwise along the microtubule wall with the beta-tubulin subunit facing the microtubule plus end conferring a structural polarity. Microtubules usually have 13 protofilaments but different protofilament numbers can be found in some organisms and specialized cells. Mg(2+) is required as a cofactor.

It is found in the cytoplasm. Its subcellular location is the cytoskeleton. Its function is as follows. Tubulin is the major constituent of microtubules, a cylinder consisting of laterally associated linear protofilaments composed of alpha- and beta-tubulin heterodimers. Microtubules grow by the addition of GTP-tubulin dimers to the microtubule end, where a stabilizing cap forms. Below the cap, tubulin dimers are in GDP-bound state, owing to GTPase activity of alpha-tubulin. The chain is Tubulin beta-1 chain (TUB1) from Colletotrichum graminicola (Maize anthracnose fungus).